We begin with the raw amino-acid sequence, 98 residues long: Hainantoxin-XVII.2 (98 aa).

Positions 1–40 (MTTVGVSLFRRSPEKITMKIAAFLGLSFLLIASYVLICEA) are cleaved as a signal peptide. A propeptide spanning residues 41 to 64 (QHPGFQELLILEENMRDPENSKER) is cleaved from the precursor. Disulfide bonds link C66–C81, C73–C85, and C80–C95.

It belongs to the hainantoxin family. 17 subfamily. In terms of tissue distribution, expressed by the venom gland.

The protein resides in the secreted. In terms of biological role, putative ion channel inhibitor. The protein is Hainantoxin-XVII.2 of Cyriopagopus hainanus (Chinese bird spider).